The primary structure comprises 522 residues: Insulinoma-associated protein 1 (522 aa).

A compositionally biased stretch (basic residues) spans 1-12; sequence MPRGFLVKRSKK. Residues 1–20 form an SNAG domain region; sequence MPRGFLVKRSKKSTPVSYRI. Disordered regions lie at residues 1 to 112 and 182 to 235; these read MPRG…SREH and AAEA…KPKA. The required and sufficient for interaction with KDM1A stretch occupies residues 2 to 7; that stretch reads PRGFLV. A necessary for interaction with CCND1 region spans residues 43–57; that stretch reads PPAPGPGPVPGPLQP. Over residues 43-61 the composition is skewed to pro residues; sequence PPAPGPGPVPGPLQPPPPT. Composition is skewed to low complexity over residues 66 to 75 and 212 to 228; these read AALAAALACA and ASAA…AKAP. The C2H2-type 1; atypical zinc finger occupies 277 to 297; it reads FICQLCKEEYADPFALAQHKC. The segment at 305-327 adopts a C2H2-type 2 zinc-finger fold; the sequence is YRCPECAKVFSCPANLASHRRWH. Positions 325-373 are disordered; the sequence is RWHKPRPAPAAARACEPETPARAEAREATGGGGSDRDTPSPGGVSESGS. Positions 339 to 351 are enriched in basic and acidic residues; that stretch reads CEPETPARAEARE. 3 C2H2-type zinc fingers span residues 378–400, 453–476, and 481–504; these read YECH…LLAH, HLCP…RLLH, and FPCK…NKCH.

The protein belongs to the INSM1 family. In terms of assembly, interacts (via the N-terminal region) with CCND1 (via cyclin N-terminal domain); the interaction competes with the binding of CCND1 to CDK4 during cell cycle progression and increases its transcriptional repressor activity. Interacts with HDAC3; the interaction increases its transcriptional repressor activity. Interacts (via the SNAG domain) with HDAC1. Interacts (via the SNAG domain) with HDAC2. Interacts (via the SNAG domain) with KDM1A. Interacts (via the SNAG domain) with RCOR1. Interacts with SORBS1.

The protein localises to the nucleus. Its function is as follows. Sequence-specific DNA-binding transcriptional regulator that plays a key role in neurogenesis and neuroendocrine cell differentiation during embryonic and/or fetal development. Binds to the consensus sequence 5'-[TG][TC][TC][TT][GA]GGG[CG]A-3' in target promoters. Acts as a transcriptional repressor of NEUROD1 and INS expression via its interaction with cyclin CCND1 in a cell cycle-independent manner. Negatively regulates skeletal muscle-specific gene expression in endocrine cells of the pituitary by inhibiting the Notch signaling pathway. Represses target gene transcription by recruiting chromatin-modifying factors, such as HDAC1, HDAC2, HDAC3, KDM1A and RCOR1 histone deacetylases. Binds to its own promoter, suggesting autoregulation as a self-control feedback mechanism. Competes with histone H3 for the same binding site on the histone demethylase complex formed by KDM1A and RCOR1, and thereby inhibits demethylation of histone H3 at 'Lys-4'. Promotes the generation and expansion of neuronal basal progenitor cells in the developing neocortex. Involved in the differentiation of endocrine cells of the developing anterior pituitary gland, of the pancreas and intestine, and of sympatho-adrenal cells in the peripheral nervous system. Promotes cell cycle signaling arrest and inhibition of cellular proliferation. The polypeptide is Insulinoma-associated protein 1 (INSM1) (Bos taurus (Bovine)).